The primary structure comprises 177 residues: ATP synthase subunit delta (177 aa).

It belongs to the ATPase delta chain family. As to quaternary structure, F-type ATPases have 2 components, F(1) - the catalytic core - and F(0) - the membrane proton channel. F(1) has five subunits: alpha(3), beta(3), gamma(1), delta(1), epsilon(1). F(0) has three main subunits: a(1), b(2) and c(10-14). The alpha and beta chains form an alternating ring which encloses part of the gamma chain. F(1) is attached to F(0) by a central stalk formed by the gamma and epsilon chains, while a peripheral stalk is formed by the delta and b chains.

The protein resides in the cell membrane. In terms of biological role, f(1)F(0) ATP synthase produces ATP from ADP in the presence of a proton or sodium gradient. F-type ATPases consist of two structural domains, F(1) containing the extramembraneous catalytic core and F(0) containing the membrane proton channel, linked together by a central stalk and a peripheral stalk. During catalysis, ATP synthesis in the catalytic domain of F(1) is coupled via a rotary mechanism of the central stalk subunits to proton translocation. Functionally, this protein is part of the stalk that links CF(0) to CF(1). It either transmits conformational changes from CF(0) to CF(1) or is implicated in proton conduction. This Buchnera aphidicola subsp. Acyrthosiphon pisum (strain 5A) protein is ATP synthase subunit delta.